The following is a 476-amino-acid chain: Scopoletin glucosyltransferase (476 aa).

The active-site Proton acceptor is the H16. H16 is an an anthocyanidin binding site. The active-site Charge relay is the D119. A343, Q345, H360, W363, N364, S365, and E368 together coordinate UDP-alpha-D-glucose. Residue A383 coordinates an anthocyanidin. Residues E384 and Q385 each coordinate UDP-alpha-D-glucose.

This sequence belongs to the UDP-glycosyltransferase family.

It catalyses the reaction scopoletin + UDP-alpha-D-glucose = scopolin + UDP + H(+). In terms of biological role, glucosyltransferase acting preferentially on aromatic substrates of the phenylpropanoid types. The best substrates are scopoletin and esculetin. Required for full resistance to virus. This chain is Scopoletin glucosyltransferase (TOGT1), found in Nicotiana tabacum (Common tobacco).